The sequence spans 194 residues: Bis(5'-nucleosyl)-tetraphosphatase, symmetrical (194 aa).

The 115-residue stretch at 18 to 132 folds into the HD domain; that stretch reads RYNHSLRVAE…IFIADYIEPG (115 aa). Position 21 (histidine 21) interacts with ADP. Residues histidine 21, histidine 50, and aspartate 51 each coordinate Fe cation. Residues 51–54, histidine 83, 109–110, aspartate 127, arginine 133, and 172–177 contribute to the ADP site; these read DFCK, HT, and TVYNKT. Aspartate 127 is a binding site for Fe cation.

This sequence belongs to the Ap4A hydrolase YqeK family. As to quaternary structure, homodimer.

It catalyses the reaction P(1),P(4)-bis(5'-adenosyl) tetraphosphate + H2O = 2 ADP + 2 H(+). With respect to regulation, inhibited by EDTA. Hydrolyzes diadenosine 5',5'''-P1,P4-tetraphosphate (Ap4A) to yield ADP. Can also hydrolyze Ap3A, Ap5A, Ap4G, Ap4U and Gp4G, always releasing ADP or GDP as one of the products, but it exhibits a marked preference for Ap4A, which is mainly exerted at the substrate affinity level. This chain is Bis(5'-nucleosyl)-tetraphosphatase, symmetrical, found in Staphylococcus aureus (strain NCTC 8325 / PS 47).